A 431-amino-acid chain; its full sequence is Mannan endo-1,4-beta-mannosidase 5 (431 aa).

Positions 1–24 are cleaved as a signal peptide; the sequence is MVPTRNRPMLRILGFFICAAFIYL. N45 carries N-linked (GlcNAc...) asparagine glycosylation. W97 is a binding site for substrate. A glycan (N-linked (GlcNAc...) asparagine) is linked at N168. Residue N213 participates in substrate binding. E214 acts as the Proton donor in catalysis. Residue N282 is glycosylated (N-linked (GlcNAc...) asparagine). Y294 is a substrate binding site. N-linked (GlcNAc...) asparagine glycosylation occurs at N301. The Nucleophile role is filled by E334. Position 376 (W376) interacts with substrate.

Belongs to the glycosyl hydrolase 5 (cellulase A) family. As to expression, expressed in stems.

Its subcellular location is the secreted. It carries out the reaction Random hydrolysis of (1-&gt;4)-beta-D-mannosidic linkages in mannans, galactomannans and glucomannans.. This is Mannan endo-1,4-beta-mannosidase 5 (MAN5) from Arabidopsis thaliana (Mouse-ear cress).